A 78-amino-acid chain; its full sequence is Acyl carrier protein (78 aa).

The Carrier domain occupies 2 to 77 (SDIAERVKKI…DAIKFLEKNA (76 aa)). Position 37 is an O-(pantetheine 4'-phosphoryl)serine (serine 37).

Belongs to the acyl carrier protein (ACP) family. 4'-phosphopantetheine is transferred from CoA to a specific serine of apo-ACP by AcpS. This modification is essential for activity because fatty acids are bound in thioester linkage to the sulfhydryl of the prosthetic group.

It is found in the cytoplasm. The protein operates within lipid metabolism; fatty acid biosynthesis. Functionally, carrier of the growing fatty acid chain in fatty acid biosynthesis. The sequence is that of Acyl carrier protein from Azorhizobium caulinodans (strain ATCC 43989 / DSM 5975 / JCM 20966 / LMG 6465 / NBRC 14845 / NCIMB 13405 / ORS 571).